Consider the following 314-residue polypeptide: 3'-5' exoribonuclease YhaM (314 aa).

An HD domain is found at 163–279 (HVVSMLDLAK…LHYIDNLDAK (117 aa)).

This sequence belongs to the YhaM family.

Shows a 3'-5' exoribonuclease activity. The chain is 3'-5' exoribonuclease YhaM from Bacillus cereus (strain G9842).